A 119-amino-acid chain; its full sequence is MARVKRGVVAHRRHKKILARAKGYYGARSRVYRVAFQAVIKAGQYAYRDRRQKKRQFRALWIARINAGARQNGLSYSRMIDGLKKAQVIIDRRVLADIAMHDAVAFAALAEKAKGALAA.

This sequence belongs to the bacterial ribosomal protein bL20 family.

Functionally, binds directly to 23S ribosomal RNA and is necessary for the in vitro assembly process of the 50S ribosomal subunit. It is not involved in the protein synthesizing functions of that subunit. The sequence is that of Large ribosomal subunit protein bL20 from Acinetobacter baylyi (strain ATCC 33305 / BD413 / ADP1).